The chain runs to 346 residues: Histidinol-phosphate aminotransferase (346 aa).

An N6-(pyridoxal phosphate)lysine modification is found at Lys-209.

Belongs to the class-II pyridoxal-phosphate-dependent aminotransferase family. Histidinol-phosphate aminotransferase subfamily. Homodimer. Pyridoxal 5'-phosphate serves as cofactor.

It catalyses the reaction L-histidinol phosphate + 2-oxoglutarate = 3-(imidazol-4-yl)-2-oxopropyl phosphate + L-glutamate. Its pathway is amino-acid biosynthesis; L-histidine biosynthesis; L-histidine from 5-phospho-alpha-D-ribose 1-diphosphate: step 7/9. The protein is Histidinol-phosphate aminotransferase of Aliivibrio fischeri (strain ATCC 700601 / ES114) (Vibrio fischeri).